The following is a 146-amino-acid chain: Suppressor APC domain-containing protein 1 (146 aa).

The segment at 121–146 is disordered; sequence HRKGVTQSTGEVVSQAPPGPKGPTLV. Pro residues predominate over residues 137 to 146; sequence PPGPKGPTLV.

In Mus musculus (Mouse), this protein is Suppressor APC domain-containing protein 1 (Sapcd1).